A 156-amino-acid chain; its full sequence is Endoribonuclease YbeY (156 aa).

Zn(2+)-binding residues include His122, His126, and His132.

This sequence belongs to the endoribonuclease YbeY family. It depends on Zn(2+) as a cofactor.

The protein localises to the cytoplasm. Functionally, single strand-specific metallo-endoribonuclease involved in late-stage 70S ribosome quality control and in maturation of the 3' terminus of the 16S rRNA. The polypeptide is Endoribonuclease YbeY (Bacillus mycoides (strain KBAB4) (Bacillus weihenstephanensis)).